A 472-amino-acid chain; its full sequence is Carboxypeptidase Q (472 aa).

A signal peptide spans methionine 1–glycine 20. Positions lysine 21–glutamate 44 are excised as a propeptide. Asparagine 61 carries N-linked (GlcNAc...) asparagine glycosylation. Zn(2+) contacts are provided by histidine 290 and aspartate 302. Glutamate 336 acts as the Nucleophile in catalysis. Glutamate 337 is a Zn(2+) binding site. N-linked (GlcNAc...) asparagine glycosylation is present at asparagine 353. Aspartate 364 is a Zn(2+) binding site. N-linked (GlcNAc...) asparagine glycosylation occurs at asparagine 396. Histidine 434 serves as a coordination point for Zn(2+).

It belongs to the peptidase M28 family. Homodimer. The monomeric form is inactive while the homodimer is active. In terms of processing, N-glycosylated. The secreted form is modified by hybrid or complex type oligosaccharide chains.

Its subcellular location is the endoplasmic reticulum. It is found in the golgi apparatus. The protein localises to the lysosome. The protein resides in the secreted. In terms of biological role, carboxypeptidase that may play an important role in the hydrolysis of circulating peptides. Catalyzes the hydrolysis of dipeptides with unsubstituted terminals into amino acids. May play a role in the liberation of thyroxine hormone from its thyroglobulin (Tg) precursor. The sequence is that of Carboxypeptidase Q (Cpq) from Rattus norvegicus (Rat).